The sequence spans 140 residues: MTVIDANGLILGRLASTVAKQLLSGDEEIYIVNAEKAVISGSRATTLKEYRETRERGSTEFGPYFPKRPDRILKRTIRGMLPYKRARGRDAMSRLKVYVGVPTELKDTETITIADADMRLLSSSKYIELGEVSQKMGSKF.

It belongs to the universal ribosomal protein uL13 family. As to quaternary structure, part of the 50S ribosomal subunit.

In terms of biological role, this protein is one of the early assembly proteins of the 50S ribosomal subunit, although it is not seen to bind rRNA by itself. It is important during the early stages of 50S assembly. The polypeptide is Large ribosomal subunit protein uL13 (Methanosarcina barkeri (strain Fusaro / DSM 804)).